We begin with the raw amino-acid sequence, 102 residues long: MNVLSYFTWFVHLSSVLEWLNIIYFFLLYTKLKKNLSLKTFIFSFFISFCSALCACTLHFFNNQSFYYFLINLQSFLTLFANITLYFSILIYKQQILKNQNY.

3 helical membrane passes run 9-29 (WFVH…FLLY), 41-61 (FIFS…LHFF), and 71-91 (INLQ…SILI).

Belongs to the ycf49 family.

It localises to the plastid. The protein resides in the cyanelle membrane. This is an uncharacterized protein from Cyanophora paradoxa.